Here is a 575-residue protein sequence, read N- to C-terminus: Guanine nucleotide-binding protein-like 3-like protein (575 aa).

Residues 1-30 show a composition bias toward basic residues; that stretch reads MMKLRHKNKKPGKGSKGCKKPAKQNGKKAA. Positions 1–75 are disordered; sequence MMKLRHKNKK…AAREQERHRR (75 aa). Positions 9–28 are required for nucleolar localization; that stretch reads KKPGKGSKGCKKPAKQNGKK. Residues 42 to 72 are compositionally biased toward basic and acidic residues; the sequence is SNDHASREAELKKKRVGEMREKQQAAREQER. A coiled-coil region spans residues 51 to 79; sequence ELKKKRVGEMREKQQAAREQERHRRRTIE. The region spanning 118–303 is the CP-type G domain; the sequence is YKEFHKVVEY…LLDAPGIVPG (186 aa). Residues 166-169, 252-259, and 296-299 each bind GTP; these read NKID, GLPNVGKS, and DAPG. Lysine 470 participates in a covalent cross-link: Glycyl lysine isopeptide (Lys-Gly) (interchain with G-Cter in SUMO1).

This sequence belongs to the TRAFAC class YlqF/YawG GTPase family. In terms of assembly, interacts with MDM2; this interaction, which occurs in the nucleoplasm, stabilizes MDM2. Indirectly interacts with TP53, via MDM2-binding. Interacts with TERF1; this interaction probably occurs in the nucleoplasm and is increased during mitosis, when the nucleolus is disassembled. This binding may promote TERF1 homodimerization. Interacts with TERT.

Its subcellular location is the nucleus. The protein localises to the nucleolus. Its function is as follows. Stabilizes TERF1 telomeric association by preventing TERF1 recruitment by PML. Stabilizes TERF1 protein by preventing its ubiquitination and hence proteasomal degradation. Does so by interfering with TERF1-binding to FBXO4 E3 ubiquitin-protein ligase. Required for cell proliferation. By stabilizing TRF1 protein during mitosis, promotes metaphase-to-anaphase transition. Stabilizes MDM2 protein by preventing its ubiquitination, and hence proteasomal degradation. By acting on MDM2, may affect TP53 activity. Required for normal processing of ribosomal pre-rRNA. Binds GTP. In Bos taurus (Bovine), this protein is Guanine nucleotide-binding protein-like 3-like protein (GNL3L).